Reading from the N-terminus, the 729-residue chain is Catalase-peroxidase (729 aa).

The segment at 1–33 (MSAHNTNESAVGKCPFHEQKEEKSVLARGAGGG) is disordered. A compositionally biased stretch (basic and acidic residues) spans 15–25 (PFHEQKEEKSV). A cross-link (tryptophyl-tyrosyl-methioninium (Trp-Tyr) (with M-255)) is located at residues 108-229 (WHSAGTYRTV…LGATEMGLIY (122 aa)). The Proton acceptor role is filled by H109. Positions 229-255 (YVNPEGPEASGNPASAAPAIRATFGNM) form a cross-link, tryptophyl-tyrosyl-methioninium (Tyr-Met) (with W-108). H270 is a binding site for heme b.

The protein belongs to the peroxidase family. Peroxidase/catalase subfamily. Homodimer or homotetramer. Requires heme b as cofactor. Post-translationally, formation of the three residue Trp-Tyr-Met cross-link is important for the catalase, but not the peroxidase activity of the enzyme.

The enzyme catalyses H2O2 + AH2 = A + 2 H2O. It catalyses the reaction 2 H2O2 = O2 + 2 H2O. Bifunctional enzyme with both catalase and broad-spectrum peroxidase activity. The chain is Catalase-peroxidase from Erwinia tasmaniensis (strain DSM 17950 / CFBP 7177 / CIP 109463 / NCPPB 4357 / Et1/99).